Reading from the N-terminus, the 128-residue chain is uncharacterized protein (128 aa).

The next 3 helical transmembrane spans lie at 1 to 21 (MLVF…LIFL), 51 to 71 (VRVE…AILG), and 76 to 96 (ANFL…VYYV).

It is found in the membrane. This is an uncharacterized protein from Saccharomyces cerevisiae (strain ATCC 204508 / S288c) (Baker's yeast).